The following is a 444-amino-acid chain: Glutamyl-tRNA reductase (444 aa).

Substrate contacts are provided by residues 49–52 (TCNR), serine 109, 114–116 (ETQ), and glutamine 120. The active-site Nucleophile is the cysteine 50. 189–194 (GAGKMG) serves as a coordination point for NADP(+).

The protein belongs to the glutamyl-tRNA reductase family. As to quaternary structure, homodimer.

The catalysed reaction is (S)-4-amino-5-oxopentanoate + tRNA(Glu) + NADP(+) = L-glutamyl-tRNA(Glu) + NADPH + H(+). Its pathway is porphyrin-containing compound metabolism; protoporphyrin-IX biosynthesis; 5-aminolevulinate from L-glutamyl-tRNA(Glu): step 1/2. Functionally, catalyzes the NADPH-dependent reduction of glutamyl-tRNA(Glu) to glutamate 1-semialdehyde (GSA). The polypeptide is Glutamyl-tRNA reductase (Bacillus cereus (strain ATCC 10987 / NRS 248)).